The primary structure comprises 93 residues: YcgL domain-containing protein swp_2294 (93 aa).

Residues 1 to 85 (MICAVYKSLR…PVVNLLEQHK (85 aa)) enclose the YcgL domain.

This Shewanella piezotolerans (strain WP3 / JCM 13877) protein is YcgL domain-containing protein swp_2294.